Consider the following 82-residue polypeptide: ATP synthase subunit c (82 aa).

2 consecutive transmembrane segments (helical) span residues 7-27 (LVALACGLIVGLGAIGASIGI) and 53-73 (FILAGLIDAAFLIGVAIALLF).

This sequence belongs to the ATPase C chain family. In terms of assembly, F-type ATPases have 2 components, F(1) - the catalytic core - and F(0) - the membrane proton channel. F(1) has five subunits: alpha(3), beta(3), gamma(1), delta(1), epsilon(1). F(0) has three main subunits: a(1), b(2) and c(10-14). The alpha and beta chains form an alternating ring which encloses part of the gamma chain. F(1) is attached to F(0) by a central stalk formed by the gamma and epsilon chains, while a peripheral stalk is formed by the delta and b chains.

Its subcellular location is the cell inner membrane. Functionally, f(1)F(0) ATP synthase produces ATP from ADP in the presence of a proton or sodium gradient. F-type ATPases consist of two structural domains, F(1) containing the extramembraneous catalytic core and F(0) containing the membrane proton channel, linked together by a central stalk and a peripheral stalk. During catalysis, ATP synthesis in the catalytic domain of F(1) is coupled via a rotary mechanism of the central stalk subunits to proton translocation. In terms of biological role, key component of the F(0) channel; it plays a direct role in translocation across the membrane. A homomeric c-ring of between 10-14 subunits forms the central stalk rotor element with the F(1) delta and epsilon subunits. This is ATP synthase subunit c from Acidovorax ebreus (strain TPSY) (Diaphorobacter sp. (strain TPSY)).